The chain runs to 417 residues: MDYFNYQEDGQLWAEQVPLADLANQYGTPLYVYSRATLERHWHAFDKSVGDYPHLICYAVKANSNLGVLNTLARLGSGFDIVSVGELERVLAAGGDPSKVVFSGVGKTEAEMKRALQLKIKCFNVESEPELQRLNKVAGELGVKAPISLRINPDVDAKTHPYISTGLRDNKFGITFDRAAQVYRLAHSLPNLDVHGIDCHIGSQLTALAPFIDATDRLLALIDSLKAEGIHIRHLDVGGGLGVVYRDELPPQPSEYAKALLDRLERHRDLELIFEPGRAIAANAGVLVTKVEFLKHTEHKNFAIIDAAMNDLIRPALYQAWQDIIPLRPRQGEAQTYDLVGPVCETSDFLGKDRDLVLQEGDLLAVRSSGAYGFTMSSNYNTRPRVAEVMVDGNKTYLVRQREELSSLWALESVLPE.

At K61 the chain carries N6-(pyridoxal phosphate)lysine. Pyridoxal 5'-phosphate is bound by residues G240 and 275-278 (EPGR). R278, R314, and Y318 together coordinate substrate. C344 (proton donor) is an active-site residue. Substrate is bound by residues E345 and Y372. Residue Y372 participates in pyridoxal 5'-phosphate binding.

The protein belongs to the Orn/Lys/Arg decarboxylase class-II family. LysA subfamily. As to quaternary structure, homodimer. It depends on pyridoxal 5'-phosphate as a cofactor.

The enzyme catalyses meso-2,6-diaminopimelate + H(+) = L-lysine + CO2. Its pathway is amino-acid biosynthesis; L-lysine biosynthesis via DAP pathway; L-lysine from DL-2,6-diaminopimelate: step 1/1. Its function is as follows. Specifically catalyzes the decarboxylation of meso-diaminopimelate (meso-DAP) to L-lysine. This is Diaminopimelate decarboxylase (lysA) from Vibrio cholerae serotype O1 (strain ATCC 39315 / El Tor Inaba N16961).